The chain runs to 493 residues: Xaa-Pro dipeptidase (493 aa).

An N-acetylalanine modification is found at Ala-2. Residue Ser-167 is modified to Phosphoserine. His-255 contacts a dipeptide. The Mn(2+) site is built by Asp-276, Asp-287, and His-370. Asp-287 contributes to the a dipeptide binding site. A dipeptide is bound by residues His-377 and Arg-398. Mn(2+)-binding residues include Glu-412 and Glu-452.

Belongs to the peptidase M24B family. Eukaryotic-type prolidase subfamily. In terms of assembly, homodimer. Mn(2+) is required as a cofactor.

It carries out the reaction Xaa-L-Pro dipeptide + H2O = an L-alpha-amino acid + L-proline. Its function is as follows. Dipeptidase that catalyzes the hydrolysis of dipeptides with a prolyl (Xaa-Pro) or hydroxyprolyl residue in the C-terminal position. The preferred dipeptide substrate is Gly-Pro, but other Xaa-Pro dipeptides, such as Ala-Pro, Met-Pro, Phe-Pro, Val-Pro and Leu-Pro, can be cleaved. Plays an important role in collagen metabolism because the high level of iminoacids in collagen. This Mus musculus (Mouse) protein is Xaa-Pro dipeptidase (Pepd).